Here is a 617-residue protein sequence, read N- to C-terminus: Thioredoxin reductase (617 aa).

FAD contacts are provided by residues 127-128 (PG), 147-150 (DYVK), 163-164 (TC), 168-172 (GCVPK), alanine 237, aspartate 433, and 440-442 (ELA). Residues cysteine 164 and cysteine 169 are joined by a disulfide bond. The loop important for the interaction with TRX1 stretch occupies residues 514-528 (HRQKHIRAQKDEYDL). Histidine 585 is an FAD binding site. Residue histidine 585 is the Proton acceptor of the active site. A disulfide bridge links cysteine 611 with cysteine 616.

The protein belongs to the class-I pyridine nucleotide-disulfide oxidoreductase family. Homodimer. The cofactor is FAD.

Its subcellular location is the mitochondrion. The protein resides in the cytoplasm. The enzyme catalyses [thioredoxin]-dithiol + NADP(+) = [thioredoxin]-disulfide + NADPH + H(+). Catalyzes the transfer of electrons from NADPH to thioredoxins TRX1, TRX2 and TRX3, which in turn act as reductants of disulfide containing proteins. Able to reduce nitroglutathione (GSNO), a compound involved in the transport of nitric oxide (NO); however, TRX1 is more efficient in reducing GSNO. Has no catalytic activity towards oxidized glutathione (GSSG). The polypeptide is Thioredoxin reductase (Plasmodium falciparum (isolate 3D7)).